Consider the following 360-residue polypeptide: Peptide chain release factor 1 (360 aa).

Position 235 is an N5-methylglutamine (Gln-235). Over residues 281–307 (ERQRADSERSADRRNQVGSGDRSERIR) the composition is skewed to basic and acidic residues. The interval 281 to 310 (ERQRADSERSADRRNQVGSGDRSERIRTYN) is disordered.

Belongs to the prokaryotic/mitochondrial release factor family. Methylated by PrmC. Methylation increases the termination efficiency of RF1.

The protein resides in the cytoplasm. Its function is as follows. Peptide chain release factor 1 directs the termination of translation in response to the peptide chain termination codons UAG and UAA. This Sinorhizobium medicae (strain WSM419) (Ensifer medicae) protein is Peptide chain release factor 1.